We begin with the raw amino-acid sequence, 270 residues long: Ribosomal RNA small subunit methyltransferase A (270 aa).

The S-adenosyl-L-methionine site is built by Asn18, Leu20, Gly45, Glu66, Asp91, and Asn112.

The protein belongs to the class I-like SAM-binding methyltransferase superfamily. rRNA adenine N(6)-methyltransferase family. RsmA subfamily.

It localises to the cytoplasm. It carries out the reaction adenosine(1518)/adenosine(1519) in 16S rRNA + 4 S-adenosyl-L-methionine = N(6)-dimethyladenosine(1518)/N(6)-dimethyladenosine(1519) in 16S rRNA + 4 S-adenosyl-L-homocysteine + 4 H(+). Its function is as follows. Specifically dimethylates two adjacent adenosines (A1518 and A1519) in the loop of a conserved hairpin near the 3'-end of 16S rRNA in the 30S particle. May play a critical role in biogenesis of 30S subunits. In Shewanella piezotolerans (strain WP3 / JCM 13877), this protein is Ribosomal RNA small subunit methyltransferase A.